The following is a 274-amino-acid chain: 2,3,4,5-tetrahydropyridine-2,6-dicarboxylate N-succinyltransferase (274 aa).

Substrate-binding residues include Arg-106 and Asp-143.

Belongs to the transferase hexapeptide repeat family. As to quaternary structure, homotrimer.

It is found in the cytoplasm. It carries out the reaction (S)-2,3,4,5-tetrahydrodipicolinate + succinyl-CoA + H2O = (S)-2-succinylamino-6-oxoheptanedioate + CoA. It participates in amino-acid biosynthesis; L-lysine biosynthesis via DAP pathway; LL-2,6-diaminopimelate from (S)-tetrahydrodipicolinate (succinylase route): step 1/3. This is 2,3,4,5-tetrahydropyridine-2,6-dicarboxylate N-succinyltransferase from Acidovorax ebreus (strain TPSY) (Diaphorobacter sp. (strain TPSY)).